Reading from the N-terminus, the 160-residue chain is Protein-export protein SecB (160 aa).

The protein belongs to the SecB family. As to quaternary structure, homotetramer, a dimer of dimers. One homotetramer interacts with 1 SecA dimer.

The protein localises to the cytoplasm. Functionally, one of the proteins required for the normal export of preproteins out of the cell cytoplasm. It is a molecular chaperone that binds to a subset of precursor proteins, maintaining them in a translocation-competent state. It also specifically binds to its receptor SecA. This chain is Protein-export protein SecB, found in Rhizobium johnstonii (strain DSM 114642 / LMG 32736 / 3841) (Rhizobium leguminosarum bv. viciae).